Here is a 328-residue protein sequence, read N- to C-terminus: Malate dehydrogenase (328 aa).

An NAD(+)-binding site is contributed by 11 to 17; the sequence is GAAGQIG. Residues Arg94 and Arg100 each coordinate substrate. Residues Asn107, Gln114, and 131–133 each bind NAD(+); that span reads VGN. 2 residues coordinate substrate: Asn133 and Arg164. The Proton acceptor role is filled by His189.

The protein belongs to the LDH/MDH superfamily. MDH type 2 family.

The catalysed reaction is (S)-malate + NAD(+) = oxaloacetate + NADH + H(+). Catalyzes the reversible oxidation of malate to oxaloacetate. This is Malate dehydrogenase from Xylella fastidiosa (strain 9a5c).